The primary structure comprises 161 residues: Cyclic pyranopterin monophosphate synthase (161 aa).

Residues 75–77 and 113–114 each bind substrate; these read LCH and ME. Aspartate 128 is an active-site residue.

This sequence belongs to the MoaC family. As to quaternary structure, homohexamer; trimer of dimers.

The catalysed reaction is (8S)-3',8-cyclo-7,8-dihydroguanosine 5'-triphosphate = cyclic pyranopterin phosphate + diphosphate. It participates in cofactor biosynthesis; molybdopterin biosynthesis. Functionally, catalyzes the conversion of (8S)-3',8-cyclo-7,8-dihydroguanosine 5'-triphosphate to cyclic pyranopterin monophosphate (cPMP). The polypeptide is Cyclic pyranopterin monophosphate synthase (Salmonella dublin (strain CT_02021853)).